Here is a 396-residue protein sequence, read N- to C-terminus: Phosphoglycerate kinase (396 aa).

Substrate is bound by residues aspartate 19–asparagine 21, arginine 35, histidine 58–arginine 61, arginine 117, and arginine 150. ATP is bound by residues lysine 201, glutamate 323, and glycine 349 to threonine 352.

It belongs to the phosphoglycerate kinase family. As to quaternary structure, monomer.

The protein localises to the cytoplasm. It catalyses the reaction (2R)-3-phosphoglycerate + ATP = (2R)-3-phospho-glyceroyl phosphate + ADP. Its pathway is carbohydrate degradation; glycolysis; pyruvate from D-glyceraldehyde 3-phosphate: step 2/5. This is Phosphoglycerate kinase from Desulfosudis oleivorans (strain DSM 6200 / JCM 39069 / Hxd3) (Desulfococcus oleovorans).